Here is a 444-residue protein sequence, read N- to C-terminus: Abhydrolase domain-containing protein abhd-5.2 (444 aa).

An AB hydrolase-1 domain is found at 162-409; that stretch reads PIVLIHGFGA…SAGHHVYADD (248 aa).

The protein belongs to the peptidase S33 family. ABHD4/ABHD5 subfamily. As to quaternary structure, interacts with atgl-1; the interaction tethers atgl-1 to lipid droplets. Expressed in the hypodermis and intestine.

The protein resides in the lipid droplet. In terms of biological role, acts coordinately with phospholipase atgl-1 within the lipolytic cascade to distribute stored energy to tissues to maintain energy levels during the dauer phase. Localizes atgl-1 to lipid droplets, possibly to facilitate triglyceride hydrolysis. Regulates lipid droplet size, lipid content, the exchange of lipids between lipid droplets and fusion of lipid droplets during the dauer phase. The polypeptide is Abhydrolase domain-containing protein abhd-5.2 (Caenorhabditis elegans).